Here is a 210-residue protein sequence, read N- to C-terminus: Proteasome subunit beta (210 aa).

Positions 1 to 9 (MIHDKVFKG) are cleaved as a propeptide — removed in mature form; by autocatalysis. The Nucleophile role is filled by threonine 10.

The protein belongs to the peptidase T1B family. In terms of assembly, the 20S proteasome core is composed of 14 alpha and 14 beta subunits that assemble into four stacked heptameric rings, resulting in a barrel-shaped structure. The two inner rings, each composed of seven catalytic beta subunits, are sandwiched by two outer rings, each composed of seven alpha subunits. The catalytic chamber with the active sites is on the inside of the barrel. Has a gated structure, the ends of the cylinder being occluded by the N-termini of the alpha-subunits. Is capped at one or both ends by the proteasome regulatory ATPase, PAN.

It is found in the cytoplasm. The catalysed reaction is Cleavage of peptide bonds with very broad specificity.. The formation of the proteasomal ATPase PAN-20S proteasome complex, via the docking of the C-termini of PAN into the intersubunit pockets in the alpha-rings, triggers opening of the gate for substrate entry. Interconversion between the open-gate and close-gate conformations leads to a dynamic regulation of the 20S proteasome proteolysis activity. Component of the proteasome core, a large protease complex with broad specificity involved in protein degradation. The protein is Proteasome subunit beta of Ferroglobus placidus (strain DSM 10642 / AEDII12DO).